The chain runs to 514 residues: ATP synthase subunit alpha (514 aa).

170 to 177 (GDRQIGKT) contacts ATP.

The protein belongs to the ATPase alpha/beta chains family. In terms of assembly, F-type ATPases have 2 components, CF(1) - the catalytic core - and CF(0) - the membrane proton channel. CF(1) has five subunits: alpha(3), beta(3), gamma(1), delta(1), epsilon(1). CF(0) has three main subunits: a(1), b(2) and c(9-12). The alpha and beta chains form an alternating ring which encloses part of the gamma chain. CF(1) is attached to CF(0) by a central stalk formed by the gamma and epsilon chains, while a peripheral stalk is formed by the delta and b chains.

The protein resides in the cell inner membrane. The enzyme catalyses ATP + H2O + 4 H(+)(in) = ADP + phosphate + 5 H(+)(out). Produces ATP from ADP in the presence of a proton gradient across the membrane. The alpha chain is a regulatory subunit. The polypeptide is ATP synthase subunit alpha (Pseudomonas savastanoi pv. phaseolicola (strain 1448A / Race 6) (Pseudomonas syringae pv. phaseolicola (strain 1448A / Race 6))).